The primary structure comprises 183 residues: Large ribosomal subunit protein uL22 (183 aa).

Residues Lys-163–Glu-183 form a disordered region. Over residues Ala-165–Glu-183 the composition is skewed to basic residues.

This sequence belongs to the universal ribosomal protein uL22 family.

This Pectinaria gouldii (Trumpet worm) protein is Large ribosomal subunit protein uL22 (rpl-17).